Reading from the N-terminus, the 1215-residue chain is RNA-dependent RNA polymerase 1 (1215 aa).

Belongs to the RdRP family. Cid12, hrr1 and rdp1 interact forming the RNA-directed RNA polymerase complex (RDRC). The RDRC complex interacts with the RITS complex via interaction between ago1 and hrr1. Clr4 has a role in mediating this interaction.

It is found in the cytoplasm. The protein resides in the nucleus. The protein localises to the chromosome. Its subcellular location is the telomere. It localises to the centromere. The catalysed reaction is RNA(n) + a ribonucleoside 5'-triphosphate = RNA(n+1) + diphosphate. Its function is as follows. Has a role in the RNA interference (RNAi) pathway which is important for heterochromatin formation, accurate chromosome segregation, centromere cohesion and telomere function during mitosis and meiosis. Required for both post-transcriptional and transcriptional gene silencing. Required for silencing at the centromeres and for initiation of transcriptionally silent heterochromatin at the mating type locus. Promotes histone H3 'Lys-10' methylation necessary for centromere function. Required for recruitment of swi6 and cohesin to an ectopic dg repeat. A member of the RNA-directed RNA polymerase complex (RDRC) which is involved in the generation of small interfering RNAs (siRNAs) and mediates their association with the RNA-induced transcriptional silencing (RITS) complex. RITS acts as a priming complex for dsRNA synthesis at the site of non-coding centromeric RNA. Its RNA-dependent RNA polymerase activity is critical in siRNA production necessary for heterochromatin formation. This is RNA-dependent RNA polymerase 1 (rdp1) from Schizosaccharomyces pombe (strain 972 / ATCC 24843) (Fission yeast).